Here is a 578-residue protein sequence, read N- to C-terminus: DNA mismatch repair protein MutL (578 aa).

It belongs to the DNA mismatch repair MutL/HexB family.

Its function is as follows. This protein is involved in the repair of mismatches in DNA. It is required for dam-dependent methyl-directed DNA mismatch repair. May act as a 'molecular matchmaker', a protein that promotes the formation of a stable complex between two or more DNA-binding proteins in an ATP-dependent manner without itself being part of a final effector complex. The protein is DNA mismatch repair protein MutL of Carboxydothermus hydrogenoformans (strain ATCC BAA-161 / DSM 6008 / Z-2901).